The primary structure comprises 177 residues: ATP synthase subunit delta (177 aa).

Belongs to the ATPase delta chain family. F-type ATPases have 2 components, F(1) - the catalytic core - and F(0) - the membrane proton channel. F(1) has five subunits: alpha(3), beta(3), gamma(1), delta(1), epsilon(1). F(0) has three main subunits: a(1), b(2) and c(10-14). The alpha and beta chains form an alternating ring which encloses part of the gamma chain. F(1) is attached to F(0) by a central stalk formed by the gamma and epsilon chains, while a peripheral stalk is formed by the delta and b chains.

It localises to the cell inner membrane. Its function is as follows. F(1)F(0) ATP synthase produces ATP from ADP in the presence of a proton or sodium gradient. F-type ATPases consist of two structural domains, F(1) containing the extramembraneous catalytic core and F(0) containing the membrane proton channel, linked together by a central stalk and a peripheral stalk. During catalysis, ATP synthesis in the catalytic domain of F(1) is coupled via a rotary mechanism of the central stalk subunits to proton translocation. This protein is part of the stalk that links CF(0) to CF(1). It either transmits conformational changes from CF(0) to CF(1) or is implicated in proton conduction. The polypeptide is ATP synthase subunit delta (Escherichia coli O81 (strain ED1a)).